Reading from the N-terminus, the 1036-residue chain is Protein P200 (1036 aa).

The interval 697-727 is disordered; the sequence is ETSELNTESDPSFEPEVEIQPEPEPNFDLET. Residues 707–727 show a composition bias toward acidic residues; sequence PSFEPEVEIQPEPEPNFDLET. 3 repeat units span residues 718 to 723, 738 to 743, and 776 to 781. Residues 718-781 form a 3 X 6 AA repeats of E-P-E-P-N-F region; it reads EPEPNFDLET…SFESEPEPNF (64 aa). Disordered stretches follow at residues 757-784 and 798-845; these read FESE…FETE and EAEV…ETEA. Residues 773 to 784 are compositionally biased toward acidic residues; the sequence is FESEPEPNFETE.

The protein resides in the cell projection. The protein localises to the attachment organelle. In terms of biological role, protein cytoskeleton-associated which plays a role in gliding motility and perhaps also in mucociliary clearance. The protein is Protein P200 (p200) of Mycoplasma pneumoniae (strain ATCC 29342 / M129 / Subtype 1) (Mycoplasmoides pneumoniae).